The sequence spans 1644 residues: Terminal uridylyltransferase 4 (1644 aa).

2 disordered regions span residues 30–60 (SNQTLKPRNDKSEIGTSSLNRNSSKKTKQND) and 75–277 (AASV…EMDY). S102 is subject to Phosphoserine. The span at 108-123 (KGSSQTKLEKTPSLQT) shows a compositional bias: polar residues. S131 is modified (phosphoserine). Polar residues-rich tracts occupy residues 146–156 (AEATTEKALNS) and 163–174 (TPTSQMKLQKTP). S176 carries the phosphoserine modification. 2 stretches are compositionally biased toward polar residues: residues 194–209 (QTESQQTGKKLTSSFV) and 226–242 (LENSSLSQKQQTQTDNI). Positions 258-272 (DLSKMKSEESNKENS) are enriched in basic and acidic residues. The interval 273–353 (SEMDYLENAT…KEKRHKKNIL (81 aa)) is required for interaction with LIN28A and pre-let-7 RNA. Zn(2+)-binding residues include C326, C329, H342, and H348. Residues 603–623 (IADENKAKADEPKDDTKKTET) show a composition bias toward basic and acidic residues. The interval 603–640 (IADENKAKADEPKDDTKKTETDNQSNAAKAKHGKSPLT) is disordered. Residues 649-698 (LGQLWLELLKFYTLDFALEEYVICVRIQDILTRENKNWPKRRIAIEDPFS) form the PAP-associated 1 domain. Disordered stretches follow at residues 733-759 (KGGNKSTMDPKKKEKGKLSSKKPVKSD) and 812-841 (HGQDSSSLSTASGGSDLKQKSAEKQGDLTP). Positions 745 to 755 (KEKGKLSSKKP) are enriched in basic residues. The segment covering 815 to 827 (DSSSLSTASGGSD) has biased composition (low complexity). The segment covering 828–837 (LKQKSAEKQG) has biased composition (basic and acidic residues). Residues 918-1634 (DKFILTSGKP…CATRRCRERC (717 aa)) form a sufficient for monouridylation activity region. Residues 930 to 947 (IVCSICKKDGHSKNDCPE) form a CCHC-type 1 zinc finger. UTP contacts are provided by residues 1015–1018 (SSKN), 1025–1028 (SDLD), N1098, K1120, 1138–1142 (SYAYI), and H1254. Positions 1026 and 1028 each coordinate Mg(2+). The PAP-associated 2 domain maps to 1201 to 1254 (SLGELWLGLLRFYTEEFDFKEYVISIRQKKLLTTFEKQWTSKCIAIEDPFDLNH). A CCHC-type 2 zinc finger spans residues 1310–1327 (RCCRVCGKIGHYMKDCPK). The disordered stretch occupies residues 1329-1350 (KRLKKKDSEEEKEGNEEEKDSR). The segment at 1358–1375 (LRCFICGDAGHVRRECPE) adopts a CCHC-type 3 zinc-finger fold. The span at 1402 to 1427 (AGSAQQQSDQSIRTRQSSECSDSPSY) shows a compositional bias: low complexity. The interval 1402-1483 (AGSAQQQSDQ…LYNFPQSPPA (82 aa)) is disordered. Positions 1428 to 1450 (SPQPQPFPQNSPQPSALPPPPSQ) are enriched in pro residues. Over residues 1451 to 1473 (PGSQPKLGPPQQGGQPPHQVQMP) the composition is skewed to low complexity. R1624 carries the post-translational modification Omega-N-methylarginine.

This sequence belongs to the DNA polymerase type-B-like family. As to quaternary structure, interacts with LIN28A in the presence of pre-let-7 RNA. Interacts with T2BP. Interacts with MOV10; the interaction is RNA-dependent. The cofactor is Mg(2+). It depends on Mn(2+) as a cofactor. In terms of tissue distribution, ubiquitously expressed.

It localises to the nucleus. It is found in the cytoplasm. The protein resides in the cytoplasmic ribonucleoprotein granule. It catalyses the reaction RNA(n) + UTP = RNA(n)-3'-uridine ribonucleotide + diphosphate. Functionally, uridylyltransferase that mediates the terminal uridylation of mRNAs with short (less than 25 nucleotides) poly(A) tails, hence facilitating global mRNA decay. Essential for both oocyte maturation and fertility. Through 3' terminal uridylation of mRNA, sculpts, with TUT7, the maternal transcriptome by eliminating transcripts during oocyte growth. Involved in microRNA (miRNA)-induced gene silencing through uridylation of deadenylated miRNA targets. Also functions as an integral regulator of microRNA biogenesiS using 3 different uridylation mechanisms. Acts as a suppressor of miRNA biogenesis by mediating the terminal uridylation of some miRNA precursors, including that of let-7 (pre-let-7), miR107, miR-143 and miR-200c. Uridylated miRNAs are not processed by Dicer and undergo degradation. Degradation of pre-let-7 contributes to the maintenance of embryonic stem (ES) cell pluripotency. Also catalyzes the 3' uridylation of miR-26A, a miRNA that targets IL6 transcript. This abrogates the silencing of IL6 transcript, hence promoting cytokine expression. In the absence of LIN28A, TUT7 and TUT4 monouridylate group II pre-miRNAs, which includes most of pre-let7 members, that shapes an optimal 3' end overhang for efficient processing. Add oligo-U tails to truncated pre-miRNAS with a 5' overhang which may promote rapid degradation of non-functional pre-miRNA species. May also suppress Toll-like receptor-induced NF-kappa-B activation via binding to T2BP. Does not play a role in replication-dependent histone mRNA degradation. Due to functional redundancy between TUT4 and TUT7, the identification of the specific role of each of these proteins is difficult. TUT4 and TUT7 restrict retrotransposition of long interspersed element-1 (LINE-1) in cooperation with MOV10 counteracting the RNA chaperonne activity of L1RE1. TUT7 uridylates LINE-1 mRNAs in the cytoplasm which inhibits initiation of reverse transcription once in the nucleus, whereas uridylation by TUT4 destabilizes mRNAs in cytoplasmic ribonucleoprotein granules. This Mus musculus (Mouse) protein is Terminal uridylyltransferase 4.